Consider the following 301-residue polypeptide: ATP synthase gamma chain (301 aa).

Belongs to the ATPase gamma chain family. In terms of assembly, F-type ATPases have 2 components, CF(1) - the catalytic core - and CF(0) - the membrane proton channel. CF(1) has five subunits: alpha(3), beta(3), gamma(1), delta(1), epsilon(1). CF(0) has three main subunits: a, b and c.

It is found in the cell inner membrane. In terms of biological role, produces ATP from ADP in the presence of a proton gradient across the membrane. The gamma chain is believed to be important in regulating ATPase activity and the flow of protons through the CF(0) complex. The protein is ATP synthase gamma chain of Bordetella petrii (strain ATCC BAA-461 / DSM 12804 / CCUG 43448).